A 241-amino-acid polypeptide reads, in one-letter code: Carboxy-S-adenosyl-L-methionine synthase (241 aa).

S-adenosyl-L-methionine-binding positions include Tyr38, 63 to 65 (GCS), 88 to 89 (DN), 116 to 117 (DI), Asn131, and Arg198.

This sequence belongs to the class I-like SAM-binding methyltransferase superfamily. Cx-SAM synthase family. Homodimer.

It catalyses the reaction prephenate + S-adenosyl-L-methionine = carboxy-S-adenosyl-L-methionine + 3-phenylpyruvate + H2O. Functionally, catalyzes the conversion of S-adenosyl-L-methionine (SAM) to carboxy-S-adenosyl-L-methionine (Cx-SAM). This chain is Carboxy-S-adenosyl-L-methionine synthase, found in Haemophilus influenzae (strain 86-028NP).